The following is a 658-amino-acid chain: DNA mismatch repair protein MutL (658 aa).

Disordered regions lie at residues Arg-114 to Ala-137 and Arg-437 to Asp-456. Residues Pro-442 to Asp-456 are compositionally biased toward polar residues.

It belongs to the DNA mismatch repair MutL/HexB family.

Functionally, this protein is involved in the repair of mismatches in DNA. It is required for dam-dependent methyl-directed DNA mismatch repair. May act as a 'molecular matchmaker', a protein that promotes the formation of a stable complex between two or more DNA-binding proteins in an ATP-dependent manner without itself being part of a final effector complex. The protein is DNA mismatch repair protein MutL of Neisseria meningitidis serogroup B (strain ATCC BAA-335 / MC58).